The primary structure comprises 341 residues: Fructose-1,6-bisphosphatase, cytosolic (341 aa).

Mg(2+)-binding residues include Glu71, Glu100, Asp121, Leu123, and Asp124. Residues 124-127 (DGCS), Asn215, Tyr247, Tyr267, and Lys277 contribute to the substrate site. Glu283 serves as a coordination point for Mg(2+).

It belongs to the FBPase class 1 family. Mg(2+) is required as a cofactor.

The protein resides in the cytoplasm. The enzyme catalyses beta-D-fructose 1,6-bisphosphate + H2O = beta-D-fructose 6-phosphate + phosphate. The polypeptide is Fructose-1,6-bisphosphatase, cytosolic (Beta vulgaris (Sugar beet)).